A 554-amino-acid polypeptide reads, in one-letter code: 3-(3-hydroxy-phenyl)propionate/3-hydroxycinnamic acid hydroxylase (554 aa).

FAD is bound by residues 17–46 (QVAIAGAGPVGLMMANYLGQMGIDVLVVEK) and 285–295 (FRIDRVLLAGD).

It belongs to the PheA/TfdB FAD monooxygenase family. It depends on FAD as a cofactor.

The enzyme catalyses 3-(3-hydroxyphenyl)propanoate + NADH + O2 + H(+) = 3-(2,3-dihydroxyphenyl)propanoate + NAD(+) + H2O. It carries out the reaction (2E)-3-(3-hydroxyphenyl)prop-2-enoate + NADH + O2 + H(+) = (2E)-3-(2,3-dihydroxyphenyl)prop-2-enoate + NAD(+) + H2O. Its pathway is aromatic compound metabolism; 3-phenylpropanoate degradation. Functionally, catalyzes the insertion of one atom of molecular oxygen into position 2 of the phenyl ring of 3-(3-hydroxyphenyl)propionate (3-HPP) and hydroxycinnamic acid (3HCI). The protein is 3-(3-hydroxy-phenyl)propionate/3-hydroxycinnamic acid hydroxylase of Escherichia coli O157:H7.